The sequence spans 504 residues: Topoisomerase I damage affected protein 11 (504 aa).

A disordered region spans residues 32–62 (RKTGRKIRSASSNGYRLEHHRTSSAGSMHSQ). A coiled-coil region spans residues 179-231 (ALLQSLATKELELLECKQKIEDLKKQTQHEEQNYTRRARELHELKEQVSKHLD). T236 carries the post-translational modification Phosphothreonine. A phosphoserine mark is found at S244 and S286. 3 disordered regions span residues 252–306 (LESR…SKQS), 332–377 (WDDS…SVSR), and 400–504 (DVIT…MTDF). A compositionally biased stretch (polar residues) spans 257–287 (ENAGNSSLPSSVSKPKNMGHQSTNQSRSVSP). Basic and acidic residues predominate over residues 290–301 (IQERRQRDDSSD). Polar residues-rich tracts occupy residues 332 to 359 (WDDS…QQYD) and 368 to 377 (KSPSQGSVSR). Basic and acidic residues predominate over residues 403–421 (TDNRCDPVYKSDRQHEQKK). Residues 470–479 (TREKKSKRSS) are compositionally biased toward basic residues. The span at 491 to 504 (DNSSVKNSVEMTDF) shows a compositional bias: polar residues.

This sequence belongs to the TDA11 family.

It localises to the cytoplasm. The polypeptide is Topoisomerase I damage affected protein 11 (TDA11) (Saccharomyces cerevisiae (strain ATCC 204508 / S288c) (Baker's yeast)).